The sequence spans 150 residues: Protein NrdI (150 aa).

The protein belongs to the NrdI family.

Functionally, probably involved in ribonucleotide reductase function. This Mycobacterium avium (strain 104) protein is Protein NrdI.